The sequence spans 188 residues: UPF0200 protein M164_1169 (188 aa).

Residue 15 to 22 (GMPGSGKS) coordinates ATP.

It belongs to the UPF0200 family.

In Saccharolobus islandicus (strain M.16.4 / Kamchatka #3) (Sulfolobus islandicus), this protein is UPF0200 protein M164_1169.